The chain runs to 889 residues: DNA mismatch repair protein MutS (889 aa).

641-648 lines the ATP pocket; the sequence is GPNMAGKS.

The protein belongs to the DNA mismatch repair MutS family.

This protein is involved in the repair of mismatches in DNA. It is possible that it carries out the mismatch recognition step. This protein has a weak ATPase activity. The sequence is that of DNA mismatch repair protein MutS from Orientia tsutsugamushi (strain Ikeda) (Rickettsia tsutsugamushi).